We begin with the raw amino-acid sequence, 340 residues long: Putative Ig-like domain-containing protein C1 (340 aa).

Positions 207-294 (PTVTVTGIER…SSPRVMVPTI (88 aa)) constitute an Ig-like domain.

The polypeptide is Putative Ig-like domain-containing protein C1 (Sus scrofa (Pig)).